Reading from the N-terminus, the 331-residue chain is Inactive serine/threonine-protein kinase BKN1 (331 aa).

Gly2 carries N-myristoyl glycine lipidation. The S-palmitoyl cysteine moiety is linked to residue Cys4. The Protein kinase domain occupies 58-328 (DYSVRKFYKG…VLDGLNHIAE (271 aa)).

Belongs to the protein kinase superfamily. Ser/Thr protein kinase family. As to expression, restricted to stigma in flowers.

It localises to the cell membrane. Its subcellular location is the nucleus. Functionally, collaboratively with BKN2/SZE2, involved in compatible pollen-stigma interactions. The polypeptide is Inactive serine/threonine-protein kinase BKN1 (Arabidopsis thaliana (Mouse-ear cress)).